Consider the following 309-residue polypeptide: Biotin synthase (309 aa).

Residues 35–259 enclose the Radical SAM core domain; sequence NKIQISSLLS…MIPKSYIRLS (225 aa). 3 residues coordinate [4Fe-4S] cluster: Cys-50, Cys-54, and Cys-57. The [2Fe-2S] cluster site is built by Cys-94, Cys-125, Cys-185, and Arg-257.

Belongs to the radical SAM superfamily. Biotin synthase family. Homodimer. Requires [4Fe-4S] cluster as cofactor. It depends on [2Fe-2S] cluster as a cofactor.

The enzyme catalyses (4R,5S)-dethiobiotin + (sulfur carrier)-SH + 2 reduced [2Fe-2S]-[ferredoxin] + 2 S-adenosyl-L-methionine = (sulfur carrier)-H + biotin + 2 5'-deoxyadenosine + 2 L-methionine + 2 oxidized [2Fe-2S]-[ferredoxin]. It participates in cofactor biosynthesis; biotin biosynthesis; biotin from 7,8-diaminononanoate: step 2/2. Functionally, catalyzes the conversion of dethiobiotin (DTB) to biotin by the insertion of a sulfur atom into dethiobiotin via a radical-based mechanism. In Rickettsia felis (strain ATCC VR-1525 / URRWXCal2) (Rickettsia azadi), this protein is Biotin synthase.